We begin with the raw amino-acid sequence, 73 residues long: Protein SlyX homolog (73 aa).

It belongs to the SlyX family.

The polypeptide is Protein SlyX homolog (Pasteurella multocida (strain Pm70)).